The chain runs to 276 residues: Urease accessory protein UreD (276 aa).

This sequence belongs to the UreD family. As to quaternary structure, ureD, UreF and UreG form a complex that acts as a GTP-hydrolysis-dependent molecular chaperone, activating the urease apoprotein by helping to assemble the nickel containing metallocenter of UreC. The UreE protein probably delivers the nickel.

The protein resides in the cytoplasm. In terms of biological role, required for maturation of urease via the functional incorporation of the urease nickel metallocenter. This is Urease accessory protein UreD from Verminephrobacter eiseniae (strain EF01-2).